The following is a 92-amino-acid chain: DNA-directed RNA polymerase subunit Rpo11 (92 aa).

This sequence belongs to the archaeal Rpo11/eukaryotic RPB11/RPC19 RNA polymerase subunit family. As to quaternary structure, part of the RNA polymerase complex.

It is found in the cytoplasm. It carries out the reaction RNA(n) + a ribonucleoside 5'-triphosphate = RNA(n+1) + diphosphate. In terms of biological role, DNA-dependent RNA polymerase (RNAP) catalyzes the transcription of DNA into RNA using the four ribonucleoside triphosphates as substrates. This chain is DNA-directed RNA polymerase subunit Rpo11, found in Methanosarcina barkeri (strain Fusaro / DSM 804).